The following is a 599-amino-acid chain: Microtubule-associated protein 70-2 (599 aa).

The interval 1–30 (MADGGGGEEGSASALRGSARRRGAVQPAGL) is disordered. The stretch at 43-349 (DPVKVELNRL…ARSEAQLKEK (307 aa)) forms a coiled coil. Residues 227–460 (ILDRLHRQKV…HLLNRSTDAV (234 aa)) are required for targeting to microtubules. 2 disordered regions span residues 357 to 453 (LEDG…PHLL) and 557 to 599 (AMRL…RNLQ). Over residues 404 to 420 (RRSPSFNSRSSLSTSSS) the composition is skewed to low complexity. Residues 533–570 (LTKAMEVEAKKMRREVAAMEKEVAAMRLDKDQENKAKR) adopt a coiled-coil conformation. The span at 557-568 (AMRLDKDQENKA) shows a compositional bias: basic and acidic residues.

It belongs to the MAP70 family.

The protein localises to the cytoplasm. It localises to the cytoskeleton. Plant-specific protein that interact with microtubules. The sequence is that of Microtubule-associated protein 70-2 (MAP70.2) from Oryza sativa subsp. japonica (Rice).